A 481-amino-acid polypeptide reads, in one-letter code: Cytochrome P450 monooygenase 2 (481 aa).

Residues glycine 12 to isoleucine 32 form a helical membrane-spanning segment. Residue cysteine 418 coordinates heme.

The protein belongs to the cytochrome P450 family. It depends on heme as a cofactor.

It localises to the membrane. The protein operates within plant hormone biosynthesis; gibberellin biosynthesis. Its function is as follows. Gibberellin 20-oxidase; part of the gene cluster that mediates the biosynthesis of gibberellins (GAs), diterpenoids that may provide a selective advantage during infection of the preferred host plant, rice. Gibberellins (GAs) are diterpenoids and are synthesized via the mevalonate pathway. Biosynthesis of the major metabolite GA3 (gibberellic acid) from geranylgeranyl diphosphate (GGPP) requires 13 steps. The GGPP produced by the geranylgeranyl diphosphate synthase GGS2 is converted to ent-kaurene via ent-copalyldiphosphate in a two-step cyclization reaction performed by the bifunctional ent-copalyl diphosphate synthase/ent-kaurene synthase enzyme (CPS/KS). Ent-Kaurene is metabolized to GAs by a series of oxidation reactions catalyzed by cytochrome P450 monooxygenases. Cytochrome P450 monooxygenase P450-4 is an ent-kaurene oxidase that catalyzes the three oxidation steps between ent-kaurene and ent-kaurenoic acid. The highly multifunctional cytochrome P450 monooxygenase P450-1 then catalyzes four steps involving oxidation at two carbon atoms, in the main pathway from ent-kaurenoic acid to GA14 via GA12-aldehyde as well as producing kaurenolides and fujenoic acids as by-products. The cytochrome P450 monooxygenase P450-2 then converts GA14 to GA4 by removal of C-20. GA4 is further converted to GA7 by the GA4 desaturase DES via 1,2-desaturation before cytochrome P450 monooxygenase P450-3, a 13-hydroxylase, hydroxylates GA7 to GA3, the final product of the GA-biosynthetic pathway. The chain is Cytochrome P450 monooygenase 2 from Gibberella fujikuroi (strain CBS 195.34 / IMI 58289 / NRRL A-6831) (Bakanae and foot rot disease fungus).